Reading from the N-terminus, the 123-residue chain is MSTIQQLIRNTRQPIEDRTKSPALRGCPQRRGVCTRVYTTTPKKPNSALRKVARVRLTSGFEITAYIPGIGHNLQEHSVVLVRGGRVKDLPGVRYHIVRGTLDAVGVKDRKQGRSQYGVKKPK.

Belongs to the universal ribosomal protein uS12 family. Part of the 30S ribosomal subunit.

It localises to the plastid. The protein resides in the chloroplast. Functionally, with S4 and S5 plays an important role in translational accuracy. Located at the interface of the 30S and 50S subunits. The sequence is that of Small ribosomal subunit protein uS12cz/uS12cy (rps12-A) from Angiopteris evecta (Mule's foot fern).